We begin with the raw amino-acid sequence, 90 residues long: Progonadoliberin-1 (90 aa).

A signal peptide spans 1-21; the sequence is MILKLMAGILLLTVCLEGCSS. Pyrrolidone carboxylic acid is present on glutamine 22. Glycine 31 is subject to Glycine amide.

It belongs to the GnRH family. In terms of processing, the precursor is cleaved by ACE, which removes the Gly-Lys-Arg peptide at the C-terminus, leading to mature hormone. The mature form of Gonadoliberin-1 is also cleaved and degraded by ACE.

It localises to the secreted. Stimulates the secretion of gonadotropins; it stimulates the secretion of both luteinizing and follicle-stimulating hormones. The polypeptide is Progonadoliberin-1 (Gnrh1) (Mus musculus (Mouse)).